A 440-amino-acid polypeptide reads, in one-letter code: Glutamyl-tRNA reductase (440 aa).

Substrate-binding positions include 50–53, S109, 114–116, and Q120; these read TCNR and EPQ. C51 (nucleophile) is an active-site residue. Residue 189 to 194 participates in NADP(+) binding; sequence GAGEMA.

Belongs to the glutamyl-tRNA reductase family. As to quaternary structure, homodimer.

The enzyme catalyses (S)-4-amino-5-oxopentanoate + tRNA(Glu) + NADP(+) = L-glutamyl-tRNA(Glu) + NADPH + H(+). It participates in porphyrin-containing compound metabolism; protoporphyrin-IX biosynthesis; 5-aminolevulinate from L-glutamyl-tRNA(Glu): step 1/2. Functionally, catalyzes the NADPH-dependent reduction of glutamyl-tRNA(Glu) to glutamate 1-semialdehyde (GSA). This chain is Glutamyl-tRNA reductase, found in Nitratidesulfovibrio vulgaris (strain DP4) (Desulfovibrio vulgaris).